Reading from the N-terminus, the 75-residue chain is Large ribosomal subunit protein bL28 (75 aa).

The protein belongs to the bacterial ribosomal protein bL28 family.

This Buchnera aphidicola subsp. Acyrthosiphon pisum (strain APS) (Acyrthosiphon pisum symbiotic bacterium) protein is Large ribosomal subunit protein bL28.